Consider the following 544-residue polypeptide: MMMTKQKNTLAERLNIGDEVRELKLGSTFNPKNTSTAFHTIKYDFKPASVDTSRMATVDVGSNNQVTVIVPNSELALNVRLLIFGLTESSGVPHTVYKGNQREYAKECLMIYDKETGAITIEKLNHNIQVKKTRTEVTNKPVQLPAQSVPMNMGHQGQVLGTNGSVPPPMAQLAQGPLSGPGGKLENSTMRVSSKDKVDFKPRNSPMQQSSPSRPVVTHRSPQSAPAWDANNAQQTLPSIPMITDDDDFGLRAAFHNGGQANISGSSTGSSSGQPDLYGSSSSSHMGKQRQAHGKRQQIHQRSSPPVQQQPHYQQQQQPNYGRAYNGASNYAQPHPQQQRHSPHQQPHQQQHQRHSPQQQQQRHSPQQLQQQRPTSYGHSNNMPMDLDSSREHDLASQSVAQAAAVLEQQIGGALSASSSSSESDSSDSDSGSDSDDSTEDDRSMKEQQEQQQQQQLQHQQIQQPAPHHQRHQQQQSQQHMNQLPNLGLGSISPSYNNHHNHQQPQPQPQQQQMSGVYASNGGFPNDLLQNDLQLSSNSSDDDD.

Positions 147–544 are disordered; it reads QSVPMNMGHQ…LSSNSSDDDD (398 aa). Residues 193–202 show a composition bias toward basic and acidic residues; that stretch reads SSKDKVDFKP. Serine 205 is subject to Phosphoserine. Residues 264 to 273 are compositionally biased toward low complexity; the sequence is SGSSTGSSSG. A compositionally biased stretch (basic residues) spans 287–299; sequence GKQRQAHGKRQQI. Composition is skewed to low complexity over residues 305 to 319, 333 to 374, and 396 to 407; these read PPVQ…QQQP, QPHP…QQRP, and ASQSVAQAAAVL. The segment covering 425 to 440 has biased composition (acidic residues); sequence DSSDSDSGSDSDDSTE. Low complexity-rich tracts occupy residues 450 to 483, 503 to 513, and 526 to 544; these read EQQQ…HMNQ, QQPQPQPQQQQ, and NDLL…DDDD.

It belongs to the EAF family.

Its subcellular location is the nucleus. Functionally, promotes transcriptional elongation by Su(Tpl)/ELL. Essential for development. This Drosophila persimilis (Fruit fly) protein is Ell-associated factor Eaf.